The chain runs to 250 residues: Maleate isomerase (250 aa).

Substrate contacts are provided by residues asparagine 15, 80 to 82 (CLV), tyrosine 137, and asparagine 167. The Nucleophile role is filled by cysteine 80. Cysteine 80 carries the S-(2-succinyl)cysteine modification. Residue cysteine 198 is the Proton donor of the active site. 199 to 200 (VQ) provides a ligand contact to substrate.

The protein belongs to the maleate isomerase family. In terms of assembly, homodimer.

It catalyses the reaction maleate = fumarate. The protein operates within cofactor degradation; nicotinate degradation. Its function is as follows. Catalyzes cis-trans isomerization of the C2-C3 double bond in maleate to yield fumarate in the aerobic nicotinate degradation pathway. This chain is Maleate isomerase, found in Pseudomonas putida (strain ATCC 47054 / DSM 6125 / CFBP 8728 / NCIMB 11950 / KT2440).